The primary structure comprises 420 residues: MLKAVILIGGPQKGTRFRPLSFEVPKPLFPVAGVPMIQHHIEACAQVPGMQEILLIGFYQPDEALTQFLEAAQQEFNLPVRYLQEFTPLGTGGGLYHFRDQILAGAPEAFFVLNADVCSDFPLSAMLDAHRLQRHPFLLLGTTANRTQSLNYGCIVENPQTHEVLHYVEKPSTFISDIINCGIYLFSPEALKPLRDVFQRNQQDGQLEESPGSWPGAGTIRLEQDVFSALAGQGQIYVHLTDGIWSQIKSAGSALYASRLYLGRYQITHPERLARHTAGGPRIRGNVYIHPTAKVAPSAVLGPNVSIGKGVTIGEGVRLRESIVLHGATLQEHTCVLHSIVGWGSTVGRWARVEGTPNDPNPNDPRARMDSESLFKDGKLLPAITILGCRVRIPAEVLILNSIVLPHKELSRSFTNQIIL.

Residues L2 to A251 are substrate-binding domain. Residues E85 and Q247 each coordinate GDP-alpha-D-mannose. The interval L273 to L420 is hexapeptide repeat domain. A C-loop region spans residues T356 to I384.

This sequence belongs to the transferase hexapeptide repeat family. As to quaternary structure, component of the GMPPA-GMPPB mannose-1-phosphate guanylyltransferase complex composed of 4 GMPPA subunits and 8 GMPPB subunits; the complex is organized into three layers, a central layer made up of 2 GMPPA dimers sandwiched between two layers each made up of 2 GMPPB dimers.

The protein localises to the cytoplasm. Functionally, regulatory subunit of the GMPPA-GMPPB mannose-1-phosphate guanylyltransferase complex; reduces the catalytic activity of GMPPB when part of the complex. Mediates allosteric feedback inhibition of GMPPB catalytic activity upon binding GDP-alpha-D-mannose. Together with GMPPB regulates GDP-alpha-D-mannose levels. The sequence is that of Mannose-1-phosphate guanylyltransferase regulatory subunit alpha (Gmppa) from Rattus norvegicus (Rat).